The following is a 707-amino-acid chain: Elongation factor G 2 (707 aa).

Residues 8-290 (ERYRNIGISA…AVIDYLPSPA (283 aa)) form the tr-type G domain. GTP contacts are provided by residues 17-24 (AHIDAGKT), 88-92 (DTPGH), and 142-145 (NKMD).

This sequence belongs to the TRAFAC class translation factor GTPase superfamily. Classic translation factor GTPase family. EF-G/EF-2 subfamily.

The protein localises to the cytoplasm. Its function is as follows. Catalyzes the GTP-dependent ribosomal translocation step during translation elongation. During this step, the ribosome changes from the pre-translocational (PRE) to the post-translocational (POST) state as the newly formed A-site-bound peptidyl-tRNA and P-site-bound deacylated tRNA move to the P and E sites, respectively. Catalyzes the coordinated movement of the two tRNA molecules, the mRNA and conformational changes in the ribosome. This chain is Elongation factor G 2, found in Bordetella bronchiseptica (strain ATCC BAA-588 / NCTC 13252 / RB50) (Alcaligenes bronchisepticus).